A 261-amino-acid polypeptide reads, in one-letter code: Putative phosphite transport system permease protein HtxE (261 aa).

The region spanning 47 to 253 is the ABC transmembrane type-1 domain; the sequence is EATTETVEVL…VFVFVLDQLQ (207 aa). The next 3 membrane-spanning stretches (helical) occupy residues 122 to 142, 203 to 220, and 229 to 249; these read LIVA…GVLA, RNLR…GGIG, and MFQY…VFVL.

Belongs to the binding-protein-dependent transport system permease family.

Its subcellular location is the cell inner membrane. In terms of biological role, probably forms part of a binding-protein-dependent hypophosphite transporter. In Stutzerimonas stutzeri (Pseudomonas stutzeri), this protein is Putative phosphite transport system permease protein HtxE (htxE).